A 161-amino-acid polypeptide reads, in one-letter code: Phosphopantetheine adenylyltransferase (161 aa).

Residue Ser11 participates in substrate binding. ATP contacts are provided by residues 11-12 (SF) and His19. 3 residues coordinate substrate: Lys43, Leu75, and Arg89. Residues 90-92 (GLR), Glu100, and 125-131 (YSFISSS) contribute to the ATP site.

This sequence belongs to the bacterial CoaD family. As to quaternary structure, homohexamer. Mg(2+) serves as cofactor.

Its subcellular location is the cytoplasm. The catalysed reaction is (R)-4'-phosphopantetheine + ATP + H(+) = 3'-dephospho-CoA + diphosphate. The protein operates within cofactor biosynthesis; coenzyme A biosynthesis; CoA from (R)-pantothenate: step 4/5. Reversibly transfers an adenylyl group from ATP to 4'-phosphopantetheine, yielding dephospho-CoA (dPCoA) and pyrophosphate. This chain is Phosphopantetheine adenylyltransferase, found in Staphylococcus saprophyticus subsp. saprophyticus (strain ATCC 15305 / DSM 20229 / NCIMB 8711 / NCTC 7292 / S-41).